The primary structure comprises 317 residues: Putative S-adenosyl-L-methionine-dependent methyltransferase MSMEG_0093 (317 aa).

S-adenosyl-L-methionine-binding positions include aspartate 134 and 163-164 (DL).

It belongs to the UPF0677 family.

Functionally, exhibits S-adenosyl-L-methionine-dependent methyltransferase activity. This chain is Putative S-adenosyl-L-methionine-dependent methyltransferase MSMEG_0093, found in Mycolicibacterium smegmatis (strain ATCC 700084 / mc(2)155) (Mycobacterium smegmatis).